The following is a 601-amino-acid chain: AT-rich interactive domain-containing protein 3A (601 aa).

The segment at 1–224 (MKLQAVMETL…HMASQMPPPD (224 aa)) is disordered. The span at 60–89 (MAALAAMRAAAAGLGHPSSPGGSEDGPPIS) shows a compositional bias: low complexity. Phosphoserine occurs at positions 78, 82, and 89. Phosphothreonine is present on Thr-99. Ser-102 carries the post-translational modification Phosphoserine. Over residues 114–123 (GHAEGDRHLM) the composition is skewed to basic and acidic residues. Ser-127 carries the post-translational modification Phosphoserine. The acidic stretch occupies residues 128–165 (DDDDTKSKWEEQELEELGEEEEEEEEEDDFEEEEEEEE). The span at 139–166 (QELEELGEEEEEEEEEDDFEEEEEEEEG) shows a compositional bias: acidic residues. Residues 243 to 335 (DPKRKEFLDD…YLYPYECERR (93 aa)) enclose the ARID domain. Residues Ser-358 and Ser-367 each carry the phosphoserine modification. Residues Lys-403, Lys-404, Lys-457, and Lys-467 each participate in a glycyl lysine isopeptide (Lys-Gly) (interchain with G-Cter in SUMO2) cross-link. The REKLES domain occupies 449 to 546 (AALEQLREKL…GVLFAQPPPP (98 aa)). Residues 450–493 (ALEQLREKLESTEPPEKKMALVADEQQRLMQRAVQQSFLAMTAQ) are important for nuclear localization. Positions 495–518 (PMNIRINSQASESRQDSAVSLTSA) are homodimerization. The important for cytoplasmic localization stretch occupies residues 542–562 (QPPPPTAPSAPGKGGVSSIGT). The interval 545–601 (PPTAPSAPGKGGVSSIGTNTTTGSRTGASGSTVSGGQVGLPGVSTPTMSSTSNNSLP) is disordered. Composition is skewed to low complexity over residues 559–579 (SIGTNTTTGSRTGASGSTVSG) and 588–601 (STPTMSSTSNNSLP).

As to quaternary structure, homodimer. Heterodimer with ARID3B. Interacts with E2F1. Interacts with GTF2I and BTK. As to expression, B-cell specific in the adult. Expressed in B-cell progenitors, down-regulated in the immature B-cell stage, and is up-regulated again at later stages of B-lymphocyte differentiation.

It localises to the nucleus. It is found in the cytoplasm. Its function is as follows. Transcription factor involved in B-cell differentiation. Binds a VH promoter proximal site necessary for induced mu-heavy-chain transcription. Binds the minor groove of a restricted ATC sequence that is sufficient for nuclear matrix association. This sequence motif is present in matrix-associating regions (MARS) proximal to the promoter and flanking E mu. Activates E mu-driven transcription by binding these sites. May be involved in the control of cell cycle progression by the RB1/E2F1 pathway. The chain is AT-rich interactive domain-containing protein 3A (Arid3a) from Mus musculus (Mouse).